The sequence spans 127 residues: Cytochrome b-c1 complex subunit 7, mitochondrial (127 aa).

It belongs to the UQCRB/QCR7 family. In terms of assembly, component of the ubiquinol-cytochrome c oxidoreductase (cytochrome b-c1 complex, complex III, CIII), a multisubunit enzyme composed of 10 subunits. The complex is composed of 3 respiratory subunits cytochrome b (COB), cytochrome c1 (CYT1) and Rieske protein (RIP1), 2 core protein subunits COR1 and QCR2, and 5 low-molecular weight protein subunits QCR6, QCR7, QCR8, QCR9 and QCR10. The complex exists as an obligatory dimer and forms supercomplexes (SCs) in the inner mitochondrial membrane with a monomer or a dimer of cytochrome c oxidase (complex IV, CIV), resulting in 2 different assemblies (supercomplexes III(2)IV and III(2)IV(2)).

It is found in the mitochondrion inner membrane. Component of the ubiquinol-cytochrome c oxidoreductase, a multisubunit transmembrane complex that is part of the mitochondrial electron transport chain which drives oxidative phosphorylation. Plays an important role in the uptake of multiple carbon sources such acetate, lactate, amino acids or GlcNAc present in different host niches. This Candida albicans (strain SC5314 / ATCC MYA-2876) (Yeast) protein is Cytochrome b-c1 complex subunit 7, mitochondrial.